The primary structure comprises 130 residues: Small ribosomal subunit protein uS11 (130 aa).

This sequence belongs to the universal ribosomal protein uS11 family. As to quaternary structure, part of the 30S ribosomal subunit. Interacts with proteins S7 and S18. Binds to IF-3.

Its function is as follows. Located on the platform of the 30S subunit, it bridges several disparate RNA helices of the 16S rRNA. Forms part of the Shine-Dalgarno cleft in the 70S ribosome. This chain is Small ribosomal subunit protein uS11, found in Xylella fastidiosa (strain 9a5c).